The following is a 277-amino-acid chain: Glycerol-3-phosphate acyltransferase (277 aa).

5 helical membrane-spanning segments follow: residues 3–23 (LFIF…AIIV), 55–75 (IMVM…AKLL), 79–99 (PVTV…PVFF), 111–131 (IGAL…TWLL), and 155–175 (LILV…ILVL). The interval 207-277 (SPATSAEQEF…PKTKTVKEKE (71 aa)) is disordered. Over residues 216–239 (FPGKEVIDTNIDETEKTEQAEAVK) the composition is skewed to basic and acidic residues. 2 stretches are compositionally biased toward basic residues: residues 240 to 253 (KPKA…AKKT) and 262 to 271 (KPRSTKPKTK).

It belongs to the PlsY family. In terms of assembly, probably interacts with PlsX.

The protein resides in the cell inner membrane. The catalysed reaction is an acyl phosphate + sn-glycerol 3-phosphate = a 1-acyl-sn-glycero-3-phosphate + phosphate. The protein operates within lipid metabolism; phospholipid metabolism. In terms of biological role, catalyzes the transfer of an acyl group from acyl-phosphate (acyl-PO(4)) to glycerol-3-phosphate (G3P) to form lysophosphatidic acid (LPA). This enzyme utilizes acyl-phosphate as fatty acyl donor, but not acyl-CoA or acyl-ACP. This Legionella pneumophila (strain Paris) protein is Glycerol-3-phosphate acyltransferase.